Reading from the N-terminus, the 625-residue chain is Zinc finger protein 652-A (625 aa).

Residues 80–255 form a disordered region; it reads FFRDSKPINE…PSDKAKSEEK (176 aa). Positions 82 to 100 are enriched in basic and acidic residues; that stretch reads RDSKPINEVHSVKGERENS. Residues 101-127 show a composition bias toward acidic residues; the sequence is GESEEEEDDDDDDDDEDDEEGEEDEDE. Basic and acidic residues predominate over residues 150-166; sequence KGDKGVAQDSSHIKTSS. Over residues 167–186 the composition is skewed to acidic residues; that stretch reads DDEEGDSGEDDQDSHEDEEN. Over residues 240-255 the composition is skewed to basic and acidic residues; the sequence is PKEPKSPSDKAKSEEK. The C2H2-type 1 zinc-finger motif lies at 258–281; sequence LTCDKCPRVFNTRWYLEKHMNVTH. The C2H2-type 2; degenerate zinc-finger motif lies at 285–307; that stretch reads QICDKCGKKFVLESELSLHLQTD. 6 C2H2-type zinc fingers span residues 312 to 335, 342 to 364, 370 to 392, 398 to 420, 426 to 448, and 454 to 476; these read IQCI…KIVH, FSCE…LVAH, FTCE…SLQH, FRCE…MSIH, FMCQ…MKTH, and FICE…RRTH. The C2H2-type 9; degenerate zinc-finger motif lies at 482–505; sequence YPCDVCGMRFRFSNMLKAHKEKCF.

Belongs to the krueppel C2H2-type zinc-finger protein family.

It is found in the nucleus. In terms of biological role, may be involved in transcriptional regulation. The protein is Zinc finger protein 652-A (znf652-a) of Xenopus laevis (African clawed frog).